We begin with the raw amino-acid sequence, 481 residues long: Glutamate--glyoxylate aminotransferase 2 (481 aa).

Lys291 is subject to N6-(pyridoxal phosphate)lysine. The Peroxisomal targeting signal signature appears at 479–481 (SRM).

Belongs to the class-I pyridoxal-phosphate-dependent aminotransferase family. Alanine aminotransferase subfamily. As to quaternary structure, homodimer. It depends on pyridoxal 5'-phosphate as a cofactor. Post-translationally, the N-terminus is blocked. In terms of tissue distribution, expressed at low levels in seedlings, leaves, flowers, roots, and green siliques.

It is found in the peroxisome. The enzyme catalyses L-alanine + 2-oxoglutarate = pyruvate + L-glutamate. It carries out the reaction glyoxylate + L-alanine = glycine + pyruvate. The catalysed reaction is glycine + 2-oxoglutarate = glyoxylate + L-glutamate. The protein operates within photosynthesis; C4 acid pathway. Its pathway is amino-acid degradation; L-alanine degradation via transaminase pathway; pyruvate from L-alanine: step 1/1. Its function is as follows. Catalyzes the Glu:glyoxylate aminotransferase (GGT), Ala:glyoxylate aminotransferase (AGT), Ala:2-oxoglutarate aminotransferase (AKT) and Glu:pyruvate aminotransferase (GPT) reactions in peroxisomes. In Arabidopsis thaliana (Mouse-ear cress), this protein is Glutamate--glyoxylate aminotransferase 2 (GGAT2).